The following is a 157-amino-acid chain: Small ribosomal subunit protein uS7 (157 aa).

The protein belongs to the universal ribosomal protein uS7 family. In terms of assembly, part of the 30S ribosomal subunit. Contacts proteins S9 and S11.

Its function is as follows. One of the primary rRNA binding proteins, it binds directly to 16S rRNA where it nucleates assembly of the head domain of the 30S subunit. Is located at the subunit interface close to the decoding center, probably blocks exit of the E-site tRNA. This Polaromonas sp. (strain JS666 / ATCC BAA-500) protein is Small ribosomal subunit protein uS7.